A 98-amino-acid chain; its full sequence is Glutaredoxin 1 (98 aa).

The region spanning methionine 1–aspartate 98 is the Glutaredoxin domain. A disulfide bond links cysteine 17 and cysteine 20.

The protein belongs to the glutaredoxin family. In terms of assembly, monomer.

It is found in the cytoplasm. Functionally, has a glutathione-disulfide oxidoreductase activity in the presence of NADPH and glutathione reductase. Reduces low molecular weight disulfides and proteins. The polypeptide is Glutaredoxin 1 (grxC1) (Rickettsia bellii (strain RML369-C)).